A 162-amino-acid chain; its full sequence is MNTKFPITAKGFKKLEHELKHLKHVERKKISEDIAEAREHGDLSENAEYEAAREKQAFIEGRIKELEDMAARAEIIDISKLSGDNIKFGATVTLIDDDTEEKVTYIVVGEYEADITRKRVSIASPIAKALIGKSVGDFVEVTTPKGSKSYEVVEVEYKALEL.

The stretch at glutamate 45–isoleucine 75 forms a coiled coil.

The protein belongs to the GreA/GreB family.

Functionally, necessary for efficient RNA polymerase transcription elongation past template-encoded arresting sites. The arresting sites in DNA have the property of trapping a certain fraction of elongating RNA polymerases that pass through, resulting in locked ternary complexes. Cleavage of the nascent transcript by cleavage factors such as GreA or GreB allows the resumption of elongation from the new 3'terminus. GreA releases sequences of 2 to 3 nucleotides. The sequence is that of Transcription elongation factor GreA from Rickettsia canadensis (strain McKiel).